We begin with the raw amino-acid sequence, 462 residues long: UDP-N-acetylmuramoylalanine--D-glutamate ligase (462 aa).

Position 117–123 (117–123 (GTNGKTT)) interacts with ATP.

It belongs to the MurCDEF family.

The protein resides in the cytoplasm. The enzyme catalyses UDP-N-acetyl-alpha-D-muramoyl-L-alanine + D-glutamate + ATP = UDP-N-acetyl-alpha-D-muramoyl-L-alanyl-D-glutamate + ADP + phosphate + H(+). The protein operates within cell wall biogenesis; peptidoglycan biosynthesis. Its function is as follows. Cell wall formation. Catalyzes the addition of glutamate to the nucleotide precursor UDP-N-acetylmuramoyl-L-alanine (UMA). The protein is UDP-N-acetylmuramoylalanine--D-glutamate ligase of Parasynechococcus marenigrum (strain WH8102).